A 431-amino-acid chain; its full sequence is Protein translocase subunit SecY 1 (431 aa).

10 helical membrane-spanning segments follow: residues 18-38 (IYFTLFILLLYRIGANITVPG), 67-87 (YSIFSLGVSPYITAQIVIQLL), 115-135 (YLTLVVAFVQSIGITLGFNAL), 150-170 (VEIAIIMTAGTMLLTWLGDEI), 178-198 (GVSVIIFAGIIARLPSGLYQI), 215-235 (ILFFIAVIVAILIVTQLVTWV), 268-288 (VIPVIFASSFIVTPATILMAF), 312-332 (GVIIYTLLIILFTFFYAFVQV), 365-385 (LIKLSTVGSIFLGLVALLPQL), and 392-412 (LPSSIGLGGTSLLIVIGVVLE).

Belongs to the SecY/SEC61-alpha family. As to quaternary structure, component of the Sec protein translocase complex. Heterotrimer consisting of SecY, SecE and SecG subunits. The heterotrimers can form oligomers, although 1 heterotrimer is thought to be able to translocate proteins. Interacts with the ribosome. Interacts with SecDF, and other proteins may be involved. Interacts with SecA.

It is found in the cell membrane. In terms of biological role, the central subunit of the protein translocation channel SecYEG. Consists of two halves formed by TMs 1-5 and 6-10. These two domains form a lateral gate at the front which open onto the bilayer between TMs 2 and 7, and are clamped together by SecE at the back. The channel is closed by both a pore ring composed of hydrophobic SecY resides and a short helix (helix 2A) on the extracellular side of the membrane which forms a plug. The plug probably moves laterally to allow the channel to open. The ring and the pore may move independently. This is Protein translocase subunit SecY 1 from Lactobacillus kefiranofaciens subsp. kefiranofaciens.